A 154-amino-acid chain; its full sequence is uncharacterized protein (154 aa).

An N-terminal signal peptide occupies residues Met1–Ala19. ShKT domains lie at Cys67–Cys102 and Cys113–Cys150. 6 disulfide bridges follow: Cys67–Cys102, Cys75–Cys95, Cys82–Cys99, Cys113–Cys150, Cys120–Cys143, and Cys129–Cys147.

This is an uncharacterized protein from Caenorhabditis elegans.